The sequence spans 160 residues: Large ribosomal subunit protein eL21 (160 aa).

Composition is skewed to basic and acidic residues over residues 112 to 123 and 136 to 146; these read NDQKKKEAKEKG and REAHFVRTNGK. The disordered stretch occupies residues 112–146; sequence NDQKKKEAKEKGTWVQLNGQPAPPREAHFVRTNGK.

Belongs to the eukaryotic ribosomal protein eL21 family. In terms of assembly, component of the large ribosomal subunit.

Its subcellular location is the cytoplasm. The protein localises to the cytosol. It localises to the endoplasmic reticulum. Component of the large ribosomal subunit. The ribosome is a large ribonucleoprotein complex responsible for the synthesis of proteins in the cell. This Rattus norvegicus (Rat) protein is Large ribosomal subunit protein eL21 (Rpl21).